The sequence spans 166 residues: uncharacterized protein (166 aa).

This is an uncharacterized protein from Xestia (XnGV).